The primary structure comprises 435 residues: 3-phosphoshikimate 1-carboxyvinyltransferase (435 aa).

3 residues coordinate 3-phosphoshikimate: Lys21, Ser22, and Arg26. Lys21 contributes to the phosphoenolpyruvate binding site. Gly99 and Arg127 together coordinate phosphoenolpyruvate. 4 residues coordinate 3-phosphoshikimate: Ser173, Gln175, Asp323, and Lys350. Gln175 lines the phosphoenolpyruvate pocket. Asp323 (proton acceptor) is an active-site residue. Phosphoenolpyruvate-binding residues include Arg354 and Arg396.

This sequence belongs to the EPSP synthase family. In terms of assembly, monomer.

The protein resides in the cytoplasm. It catalyses the reaction 3-phosphoshikimate + phosphoenolpyruvate = 5-O-(1-carboxyvinyl)-3-phosphoshikimate + phosphate. The protein operates within metabolic intermediate biosynthesis; chorismate biosynthesis; chorismate from D-erythrose 4-phosphate and phosphoenolpyruvate: step 6/7. Its function is as follows. Catalyzes the transfer of the enolpyruvyl moiety of phosphoenolpyruvate (PEP) to the 5-hydroxyl of shikimate-3-phosphate (S3P) to produce enolpyruvyl shikimate-3-phosphate and inorganic phosphate. This chain is 3-phosphoshikimate 1-carboxyvinyltransferase, found in Akkermansia muciniphila (strain ATCC BAA-835 / DSM 22959 / JCM 33894 / BCRC 81048 / CCUG 64013 / CIP 107961 / Muc).